A 357-amino-acid polypeptide reads, in one-letter code: Enoyl-[acyl-carrier-protein] reductase, mitochondrial (357 aa).

A mitochondrion-targeting transit peptide spans 1 to 19 (MLRRGFLSRINAAQWSRQM). Residues 36–352 (EVLQLVEDKL…FKGFTGKKYI (317 aa)) form the Enoyl reductase (ER) domain. Tyrosine 74 acts as the Proton donor in catalysis. Residues asparagine 147, 173 to 176 (NSAV), 196 to 198 (RDR), 264 to 267 (YGGM), 289 to 291 (FWM), lysine 349, and lysine 350 contribute to the NADP(+) site.

The protein belongs to the zinc-containing alcohol dehydrogenase family. Quinone oxidoreductase subfamily. Homodimer. Expressed in the central nervous system.

It is found in the mitochondrion. It catalyses the reaction a 2,3-saturated acyl-[ACP] + NADP(+) = a (2E)-enoyl-[ACP] + NADPH + H(+). In terms of biological role, catalyzes the NADPH-dependent reduction of trans-2-enoyl thioesters in mitochondrial fatty acid synthesis (fatty acid synthesis type II). Fatty acid chain elongation in mitochondria uses acyl carrier protein (ACP) as an acyl group carrier, but the enzyme accepts both ACP and CoA thioesters as substrates in vitro. Involved in iron homeostasis; affecting Fe-S cluster assembly and ceramide metabolism. Required for proper morphology and bioenergetic functions of mitochondria. Required for maintenance of neurons, including photoreceptor neurons. This Drosophila melanogaster (Fruit fly) protein is Enoyl-[acyl-carrier-protein] reductase, mitochondrial.